A 497-amino-acid polypeptide reads, in one-letter code: Probable cytosol aminopeptidase (497 aa).

Mn(2+) contacts are provided by lysine 268 and aspartate 273. Residue lysine 280 is part of the active site. The Mn(2+) site is built by aspartate 291, aspartate 350, and glutamate 352. The active site involves arginine 354.

The protein belongs to the peptidase M17 family. Mn(2+) is required as a cofactor.

The protein localises to the cytoplasm. The catalysed reaction is Release of an N-terminal amino acid, Xaa-|-Yaa-, in which Xaa is preferably Leu, but may be other amino acids including Pro although not Arg or Lys, and Yaa may be Pro. Amino acid amides and methyl esters are also readily hydrolyzed, but rates on arylamides are exceedingly low.. The enzyme catalyses Release of an N-terminal amino acid, preferentially leucine, but not glutamic or aspartic acids.. Its function is as follows. Presumably involved in the processing and regular turnover of intracellular proteins. Catalyzes the removal of unsubstituted N-terminal amino acids from various peptides. The polypeptide is Probable cytosol aminopeptidase (Alkalilimnicola ehrlichii (strain ATCC BAA-1101 / DSM 17681 / MLHE-1)).